The primary structure comprises 256 residues: MQIKIGEIESKLNKIIEEEGAAYFVLIDPDEKNYREIANHVKDYADAIIIGGSIGIINLDEVTKDIKEITGLPIILFPGNVDGVTKEADAVFFMSLMNSKNTYWNMTAPTLGALTIKKYGLETLPMAYLGIEPISKTAVGFVGEVNEIPQKKPEIAGLYSLSASYFGMRWAYLEAGSGAEYPVSNEMVGISKKLSGINIIVGGGIRTPEVAYEKVMSGADVIVTGTLTEKDPQAVVEMKKAIKKAGLDKLKMLSKK.

Residues aspartate 28 and serine 53 each coordinate Mg(2+). Sn-glycerol 1-phosphate is bound by residues 172–178 (YLEAGSG), 203–204 (GG), and 225–226 (GT).

This sequence belongs to the GGGP/HepGP synthase family. Group II subfamily. Mg(2+) serves as cofactor.

It localises to the cytoplasm. It carries out the reaction sn-glycerol 1-phosphate + (2E,6E,10E)-geranylgeranyl diphosphate = sn-3-O-(geranylgeranyl)glycerol 1-phosphate + diphosphate. It functions in the pathway membrane lipid metabolism; glycerophospholipid metabolism. Functionally, prenyltransferase that catalyzes the transfer of the geranylgeranyl moiety of geranylgeranyl diphosphate (GGPP) to the C3 hydroxyl of sn-glycerol-1-phosphate (G1P). This reaction is the first ether-bond-formation step in the biosynthesis of archaeal membrane lipids. The polypeptide is Geranylgeranylglyceryl phosphate synthase (Methanococcus maripaludis (strain DSM 14266 / JCM 13030 / NBRC 101832 / S2 / LL)).